Here is a 221-residue protein sequence, read N- to C-terminus: Glycerol metabolism activator (221 aa).

Residues 3–120 (KILIADDHPL…QMTDAIEQIL (118 aa)) form the Response regulatory domain. Position 55 is a 4-aspartylphosphate (aspartate 55). An HTH luxR-type domain is found at 149-214 (APELLQALTR…QAILSAGDID (66 aa)). The segment at residues 173-192 (NKQIAYNLDIAETTVKAHVS) is a DNA-binding region (H-T-H motif).

Functionally, positive activator for glycerol metabolism. Regulates the expression of qedA in a positive manner and governs the expression of ADH I and ADH IIB. General regulator of quinoprotein ethanol oxidation and affects expression of ADH IIG activity but is not the sole regulator. The sequence is that of Glycerol metabolism activator from Pseudomonas putida (Arthrobacter siderocapsulatus).